We begin with the raw amino-acid sequence, 127 residues long: Ribosome-binding factor A (127 aa).

The protein belongs to the RbfA family. Monomer. Binds 30S ribosomal subunits, but not 50S ribosomal subunits or 70S ribosomes.

The protein localises to the cytoplasm. Its function is as follows. One of several proteins that assist in the late maturation steps of the functional core of the 30S ribosomal subunit. Associates with free 30S ribosomal subunits (but not with 30S subunits that are part of 70S ribosomes or polysomes). Required for efficient processing of 16S rRNA. May interact with the 5'-terminal helix region of 16S rRNA. The protein is Ribosome-binding factor A of Stenotrophomonas maltophilia (strain K279a).